The sequence spans 313 residues: MQPLVILTGPTAVGKTKLSIDLAKSINGEIISADSMQVYRHMDIGTAKITPEEMEGVTHYLVDEFEPDEEFNVVKFKDCAKEAIREIYSKGKVPIIVGGTGFYIQAVLKDIDFTENDSDTPYRKELEELAQTEGAIKLHDILKQCDPVAAEAIHPNNIKRTIRAIEYFKLTGEPISKHNEEQRGNESPYQYAYFVLNNDREILYENIDLRVDKMLDAGLVKEVLWLKEQGYDRSLVSMQGLGYKEIYAYLEGECSLEETVYLLKRDTRHFAKRQLTWFKREQDVIWLSKKDYNSDASILTEMVKILTEKEIIK.

9–16 (GPTAVGKT) contacts ATP. Residue 11–16 (TAVGKT) coordinates substrate. An interaction with substrate tRNA region spans residues 34–37 (DSMQ).

Belongs to the IPP transferase family. Monomer. Mg(2+) is required as a cofactor.

It carries out the reaction adenosine(37) in tRNA + dimethylallyl diphosphate = N(6)-dimethylallyladenosine(37) in tRNA + diphosphate. Functionally, catalyzes the transfer of a dimethylallyl group onto the adenine at position 37 in tRNAs that read codons beginning with uridine, leading to the formation of N6-(dimethylallyl)adenosine (i(6)A). This is tRNA dimethylallyltransferase from Lachnoclostridium phytofermentans (strain ATCC 700394 / DSM 18823 / ISDg) (Clostridium phytofermentans).